A 460-amino-acid polypeptide reads, in one-letter code: MLKEYRTVTEVVGPLMAVEGVEGVKYDELVEIEMQTGELRRGKVLEVNGDKAMVQLFEGSAGINLKNTKVRFLGRPLEIGVSEDMLGRVFDGMGRPKDNGPNIIPEKRLDINGEAINPVARNYPSEFIQTGISAIDGLNTLVRGQKLPVFSGSGLPHKELAAQIARQAKVLNSDSKFAVVFAAIGITFEEAEFFVDEFTKTGAIDRSVLFMNLASDPAIERIATPRMALTTAEYLAYEKGMHVLVIMTDITNYCEALREVSAARKEVPGRRGYPGYLYTDLSTLYERAGRLVGKEGSITQIPILTMPEDDKTHPIPDLTGYITEGQIILSRELYKKGIMPPIDVLPSLSRLKDKGIGKGKTREDHADTMNQLFSAYAQGKQAKELAAILGESALSDVDKAYAKFAEAFENEYVSQGFTTNRTIEETLNLGWKLLKILPRTELKRIRDEYLEKYMPVGEDE.

The protein belongs to the ATPase alpha/beta chains family.

In terms of biological role, produces ATP from ADP in the presence of a proton gradient across the membrane. The V-type beta chain is a regulatory subunit. This Clostridium perfringens (strain ATCC 13124 / DSM 756 / JCM 1290 / NCIMB 6125 / NCTC 8237 / Type A) protein is V-type ATP synthase beta chain.